The chain runs to 368 residues: N-acetylneuraminate epimerase 2 (368 aa).

The N-terminal stretch at 1–19 (MNKTITALAILMASFAANA) is a signal peptide. 7 Kelch repeats span residues 40 to 84 (TVYI…AFID), 86 to 137 (NLYV…FVHN), 139 to 173 (KAYVTGGVNQNIFNGYFEDLNEAGKDSTAIDKINA), 174 to 219 (YYFD…VNKG), 222 to 265 (TWLI…VAGG), 287 to 336 (ENYQ…LWNN), and 338 to 367 (LLIIGGEAAGGKAVTDSVLISVKDNKVTVQ). Glu-228 functions as the Proton acceptor in the catalytic mechanism.

This sequence belongs to the NanM family. Homodimer.

Its subcellular location is the periplasm. The enzyme catalyses N-acetyl-alpha-neuraminate = N-acetyl-beta-neuraminate. Its function is as follows. Converts alpha-N-acetylneuranimic acid (Neu5Ac) to the beta-anomer, accelerating the equilibrium between the alpha- and beta-anomers. Probably facilitates sialidase-negative bacteria to compete successfully for limited amounts of extracellular Neu5Ac, which is likely taken up in the beta-anomer. In addition, the rapid removal of sialic acid from solution might be advantageous to the bacterium to damp down host responses. The polypeptide is N-acetylneuraminate epimerase 2 (Escherichia coli O6:H1 (strain CFT073 / ATCC 700928 / UPEC)).